A 493-amino-acid chain; its full sequence is MISSKPRLVVPYGLKTLLEGISRAVLKTNPSNINQFAAAYFQELTMYRGNTTMDIKDLVKQFHQIKVEKWSEGTTPQKKLECLKEPGKTSVESKVPTQMEKSTDTDEDNVTRTEYSDKTTQFPSVYAVPGTEQTEAVGGLSSKPATPKTTTPPSSPPPTAVSPEFAYVPADPAQLAAQMLGKVSSIHSDQSDVLMVDVATSMPVVIKEVPSSEAAEDVMVAAPLVCSGKVLEVQVVNQTSVHVDLGSQPKENEAEPSTASSVPLQDEQEPPAYDQAPEVTLQADIEVMSTVHISSVYNDVPVTEGVVYIEQLPEQIVIPFTDQVACLKENEQSKENEQSPRVSPKSVVEKTTSGMSKKSVESVKLAQLEENAKYSSVYMEAEATALLSDTSLKGQPEVPAQLLDAEGAIKIGSEKSLHLEVEITSIVSDNTGQEESGENSVPQEMEGKPVLSGEAAEAVHSGTSVKSSSGPFPPAPEGLTAPEIEPEGESTAE.

Positions 12–49 (YGLKTLLEGISRAVLKTNPSNINQFAAAYFQELTMYRG) constitute an RIIa domain. Disordered stretches follow at residues 85–164 (EPGK…VSPE), 244–271 (DLGS…QEPP), 330–354 (NEQS…TTSG), and 426–493 (IVSD…STAE). Positions 90 to 100 (SVESKVPTQME) are enriched in polar residues. Basic and acidic residues predominate over residues 101–117 (KSTDTDEDNVTRTEYSD). Positions 141 to 152 (SSKPATPKTTTP) are enriched in low complexity. Threonine 151 carries the post-translational modification Phosphothreonine. Position 155 is a phosphoserine (serine 155). Composition is skewed to polar residues over residues 426–442 (IVSD…NSVP) and 461–470 (SGTSVKSSSG). A compositionally biased stretch (acidic residues) spans 484-493 (IEPEGESTAE).

As to quaternary structure, interacts with FSCB. Isoform 3 self-associates. Isoform 3 and isoform 5 interact with GSK3B. Isoform 1 does not interact with GSK3B. In terms of processing, isoform 1 is phosphorylated on tyrosine residues during in vitro capacitation. Isoform 3 and isoform 5 are phosphorylated by GSK3B in vitro. Dephosphorylation affects its ability to bind calcium. As to expression, expressed in elongating spermatids and spermatozoa (at protein level). Isoform 1 is expressed in testis. Isoform 3 and isoform 5 are also expressed in brain, pancreas and numerous brain tumors.

The protein resides in the cytoplasm. It localises to the cytoskeleton. Its subcellular location is the cell projection. The protein localises to the cilium. It is found in the flagellum. The protein resides in the nucleus. In terms of biological role, may function as a regulator of both motility- and head-associated functions such as capacitation and the acrosome reaction. Isoform 1 binds calcium in vitro. Isoform 2 and isoform 6 probably bind calcium. Isoform 3 and isoform 5 do not bind calcium in vitro. Isoform 4 probably does not bind calcium. This Homo sapiens (Human) protein is Calcium-binding tyrosine phosphorylation-regulated protein (CABYR).